The sequence spans 392 residues: 8-amino-7-oxononanoate synthase (392 aa).

A pyridoxal 5'-phosphate-binding site is contributed by 108-109 (GF). His-133 contacts substrate. Pyridoxal 5'-phosphate contacts are provided by residues Ser-180, 205–208 (DDAH), and 236–239 (TLSK). Lys-239 carries the N6-(pyridoxal phosphate)lysine modification. Residue Thr-353 participates in substrate binding.

It belongs to the class-II pyridoxal-phosphate-dependent aminotransferase family. BioF subfamily. In terms of assembly, homodimer. Pyridoxal 5'-phosphate is required as a cofactor.

It catalyses the reaction 6-carboxyhexanoyl-[ACP] + L-alanine + H(+) = (8S)-8-amino-7-oxononanoate + holo-[ACP] + CO2. The protein operates within cofactor biosynthesis; biotin biosynthesis. Catalyzes the decarboxylative condensation of pimeloyl-[acyl-carrier protein] and L-alanine to produce 8-amino-7-oxononanoate (AON), [acyl-carrier protein], and carbon dioxide. In Bacillus pumilus (strain SAFR-032), this protein is 8-amino-7-oxononanoate synthase.